A 492-amino-acid polypeptide reads, in one-letter code: 2,3-bisphosphoglycerate-independent phosphoglycerate mutase (492 aa).

Mn(2+) is bound by residues Asp11 and Ser61. Catalysis depends on Ser61, which acts as the Phosphoserine intermediate. Substrate-binding positions include His118, Arg147–Asp148, Arg177, Arg183, Arg248–Arg251, and Lys321. Mn(2+)-binding residues include Asp387, His391, Asp428, His429, and His446.

This sequence belongs to the BPG-independent phosphoglycerate mutase family. As to quaternary structure, monomer. Mn(2+) serves as cofactor.

It catalyses the reaction (2R)-2-phosphoglycerate = (2R)-3-phosphoglycerate. Its pathway is carbohydrate degradation; glycolysis; pyruvate from D-glyceraldehyde 3-phosphate: step 3/5. Functionally, catalyzes the interconversion of 2-phosphoglycerate and 3-phosphoglycerate. The protein is 2,3-bisphosphoglycerate-independent phosphoglycerate mutase of Wolinella succinogenes (strain ATCC 29543 / DSM 1740 / CCUG 13145 / JCM 31913 / LMG 7466 / NCTC 11488 / FDC 602W) (Vibrio succinogenes).